The following is a 29-amino-acid chain: SQXPQSETDYSQLSGEWNTIYGAASNIXK.

Belongs to the calycin superfamily. Lipocalin family.

Its subcellular location is the secreted. This is Dander allergen Equ c 2.0101 from Equus caballus (Horse).